The following is an 843-amino-acid chain: Translation initiation factor IF-2 (843 aa).

Positions 198–219 (YKREEEEKKSKAKKAGGKGFKK) are disordered. The segment covering 207–219 (SKAKKAGGKGFKK) has biased composition (basic residues). The 168-residue stretch at 345–512 (SRAPVVTIMG…AVLLQSEVLE (168 aa)) folds into the tr-type G domain. The G1 stretch occupies residues 354-361 (GHVDHGKT). 354 to 361 (GHVDHGKT) is a GTP binding site. Residues 379-383 (GITQH) are G2. Residues 400 to 403 (DTPG) are G3. Residues 400–404 (DTPGH) and 454–457 (NKID) contribute to the GTP site. Residues 454 to 457 (NKID) form a G4 region. The tract at residues 490–492 (SAK) is G5.

The protein belongs to the TRAFAC class translation factor GTPase superfamily. Classic translation factor GTPase family. IF-2 subfamily.

The protein localises to the cytoplasm. Functionally, one of the essential components for the initiation of protein synthesis. Protects formylmethionyl-tRNA from spontaneous hydrolysis and promotes its binding to the 30S ribosomal subunits. Also involved in the hydrolysis of GTP during the formation of the 70S ribosomal complex. The chain is Translation initiation factor IF-2 from Francisella tularensis subsp. tularensis (strain WY96-3418).